Consider the following 501-residue polypeptide: Cytochrome P450 90A3 (501 aa).

The helical transmembrane segment at 2–22 threads the bilayer; that stretch reads AAAALLLLAAAAAIVVVAMVL. Residue cysteine 446 participates in heme binding.

The protein belongs to the cytochrome P450 family. Heme serves as cofactor. As to expression, highly expressed in shoot apex and inflorenscence. Expressed in roots, stems, leaf blades and leaf sheaths.

The protein localises to the membrane. The protein operates within plant hormone biosynthesis; brassinosteroid biosynthesis. Its function is as follows. Catalyzes the C23-alpha-hydroxylation step in brassinosteroid biosynthesis. Converts 6-deoxocathasterone (6-deoxoCT) to 6-deoxoteasterone (6-deoxoTE) in the late C6-oxidation pathway and cathasterone (CT) to teasterone (TE) in the early C6-oxidation pathway of brassinolide (BL) biosynthesis. The protein is Cytochrome P450 90A3 of Oryza sativa subsp. japonica (Rice).